The sequence spans 522 residues: DNA damage-binding protein cmr1 (522 aa).

Polar residues predominate over residues 34–47 (VFTPTLPNRATGSQ). Disordered regions lie at residues 34 to 89 (VFTP…KRKA) and 217 to 239 (QEKP…DPVL). The span at 49-59 (KTKKKPAPKKV) shows a compositional bias: basic residues. The WD 1 repeat unit spans residues 182-223 (LTPERVYTMTFHPSETKPLIFAGDKMGHLGILDASQEKPTSV). Over residues 226–236 (EDEDEEDDDPD) the composition is skewed to acidic residues. WD repeat units follow at residues 244 to 284 (PHTR…SVER), 294 to 331 (VPLS…QGSV), 336 to 376 (LSEK…RREP), 381 to 422 (EHQS…ASWK), 445 to 488 (GRWV…LAQL), and 491 to 522 (DGIT…CLWM).

It belongs to the WD repeat DDB2/WDR76 family.

Its function is as follows. DNA-binding protein that binds to both single- and double-stranded DNA. Binds preferentially to UV-damaged DNA. May be involved in DNA-metabolic processes. The protein is DNA damage-binding protein cmr1 of Aspergillus oryzae (strain ATCC 42149 / RIB 40) (Yellow koji mold).